The primary structure comprises 195 residues: Molybdenum cofactor guanylyltransferase (195 aa).

GTP-binding positions include 10–12 (LAG), K23, N51, D69, and D99. D99 provides a ligand contact to Mg(2+).

Belongs to the MobA family. Monomer. It depends on Mg(2+) as a cofactor.

It is found in the cytoplasm. It carries out the reaction Mo-molybdopterin + GTP + H(+) = Mo-molybdopterin guanine dinucleotide + diphosphate. Functionally, transfers a GMP moiety from GTP to Mo-molybdopterin (Mo-MPT) cofactor (Moco or molybdenum cofactor) to form Mo-molybdopterin guanine dinucleotide (Mo-MGD) cofactor. This chain is Molybdenum cofactor guanylyltransferase, found in Yersinia pestis bv. Antiqua (strain Antiqua).